Reading from the N-terminus, the 205-residue chain is Holliday junction branch migration complex subunit RuvA (205 aa).

A domain I region spans residues 1–64 (MIGRLKGILV…EDAQLLYGFI (64 aa)). A domain II region spans residues 65 to 143 (HKEERSLFRL…SLMEASMGAE (79 aa)). Residues 144–156 (REFVLKSNFTPAP) form a flexible linker region. A domain III region spans residues 157–205 (VAATVEEDAIAALLSLGYKPQQASKAVSSAFQEGMDPEQLIKAALKSML).

Belongs to the RuvA family. In terms of assembly, homotetramer. Forms an RuvA(8)-RuvB(12)-Holliday junction (HJ) complex. HJ DNA is sandwiched between 2 RuvA tetramers; dsDNA enters through RuvA and exits via RuvB. An RuvB hexamer assembles on each DNA strand where it exits the tetramer. Each RuvB hexamer is contacted by two RuvA subunits (via domain III) on 2 adjacent RuvB subunits; this complex drives branch migration. In the full resolvosome a probable DNA-RuvA(4)-RuvB(12)-RuvC(2) complex forms which resolves the HJ.

It is found in the cytoplasm. Functionally, the RuvA-RuvB-RuvC complex processes Holliday junction (HJ) DNA during genetic recombination and DNA repair, while the RuvA-RuvB complex plays an important role in the rescue of blocked DNA replication forks via replication fork reversal (RFR). RuvA specifically binds to HJ cruciform DNA, conferring on it an open structure. The RuvB hexamer acts as an ATP-dependent pump, pulling dsDNA into and through the RuvAB complex. HJ branch migration allows RuvC to scan DNA until it finds its consensus sequence, where it cleaves and resolves the cruciform DNA. In Shewanella amazonensis (strain ATCC BAA-1098 / SB2B), this protein is Holliday junction branch migration complex subunit RuvA.